Here is a 258-residue protein sequence, read N- to C-terminus: Imidazole glycerol phosphate synthase subunit HisF (258 aa).

Catalysis depends on residues D11 and D130.

It belongs to the HisA/HisF family. Heterodimer of HisH and HisF.

It is found in the cytoplasm. It catalyses the reaction 5-[(5-phospho-1-deoxy-D-ribulos-1-ylimino)methylamino]-1-(5-phospho-beta-D-ribosyl)imidazole-4-carboxamide + L-glutamine = D-erythro-1-(imidazol-4-yl)glycerol 3-phosphate + 5-amino-1-(5-phospho-beta-D-ribosyl)imidazole-4-carboxamide + L-glutamate + H(+). It participates in amino-acid biosynthesis; L-histidine biosynthesis; L-histidine from 5-phospho-alpha-D-ribose 1-diphosphate: step 5/9. Its function is as follows. IGPS catalyzes the conversion of PRFAR and glutamine to IGP, AICAR and glutamate. The HisF subunit catalyzes the cyclization activity that produces IGP and AICAR from PRFAR using the ammonia provided by the HisH subunit. This chain is Imidazole glycerol phosphate synthase subunit HisF, found in Methylorubrum extorquens (strain PA1) (Methylobacterium extorquens).